Here is a 214-residue protein sequence, read N- to C-terminus: Adenylate kinase (214 aa).

Gly10–Thr15 provides a ligand contact to ATP. Residues Ser30–Val59 are NMP. AMP is bound by residues Thr31, Arg36, Gly57–Val59, Gly85–Arg88, and Gln92. Residues Gly126–Asp163 form an LID region. Residue Arg127 participates in ATP binding. Zn(2+) contacts are provided by Cys130 and Cys133. Val136 to Tyr137 contacts ATP. Residues Cys150 and Asp153 each coordinate Zn(2+). Arg160 and Arg171 together coordinate AMP. ATP is bound at residue Gly199.

Belongs to the adenylate kinase family. As to quaternary structure, monomer.

The protein localises to the cytoplasm. It carries out the reaction AMP + ATP = 2 ADP. It participates in purine metabolism; AMP biosynthesis via salvage pathway; AMP from ADP: step 1/1. Catalyzes the reversible transfer of the terminal phosphate group between ATP and AMP. Plays an important role in cellular energy homeostasis and in adenine nucleotide metabolism. The polypeptide is Adenylate kinase (Anaeromyxobacter dehalogenans (strain 2CP-C)).